A 582-amino-acid polypeptide reads, in one-letter code: Protein alan shepard (582 aa).

Pro residues predominate over residues 1–12 (MHPRYSPAPPPQ). Positions 1–73 (MHPRYSPAPP…AAPPTSRSAF (73 aa)) are disordered. Tyrosine 5 bears the Phosphotyrosine mark. Low complexity predominate over residues 13–24 (QQQQMGGPPHQQ). Over residues 25 to 35 (QGGGGGGGGSM) the composition is skewed to gly residues. Polar residues predominate over residues 37–57 (GPSNAQQLPPQIPRSQNYSNG). A compositionally biased stretch (low complexity) spans 58–72 (SSSSAAAAPPTSRSA). Phosphotyrosine occurs at positions 125 and 142. A disordered region spans residues 164-225 (PATTTYGQRV…TVQNQNQQGG (62 aa)). Over residues 178-225 (SPSNTNSSSSSNTGSQSGTLSTSLSNTTNTNTNMGPNGTVQNQNQQGG) the composition is skewed to low complexity. RRM domains are found at residues 231 to 304 (TNLY…MAKQ) and 310 to 389 (TNLY…FADG). Positions 555-582 (PMTDSEQASTAASPDEAYTQYPHQAAPK) are disordered.

Its function is as follows. Has a role in the perception of gravity. The sequence is that of Protein alan shepard from Drosophila erecta (Fruit fly).